Consider the following 425-residue polypeptide: Isocitrate dehydrogenase [NADP] (425 aa).

Threonine 114 is an NADP(+) binding site. Residues serine 123, asparagine 125, arginine 129, arginine 139, and arginine 162 each coordinate D-threo-isocitrate. Aspartate 316 is a Mg(2+) binding site. NADP(+) is bound by residues histidine 348 to tyrosine 354, asparagine 361, tyrosine 400, and arginine 404.

It belongs to the isocitrate and isopropylmalate dehydrogenases family. As to quaternary structure, homodimer. Mg(2+) serves as cofactor. It depends on Mn(2+) as a cofactor.

The catalysed reaction is D-threo-isocitrate + NADP(+) = 2-oxoglutarate + CO2 + NADPH. Its function is as follows. Catalyzes the oxidative decarboxylation of isocitrate to 2-oxoglutarate and carbon dioxide with the concomitant reduction of NADP(+). The sequence is that of Isocitrate dehydrogenase [NADP] (icd) from Helicobacter pylori (strain ATCC 700392 / 26695) (Campylobacter pylori).